A 155-amino-acid polypeptide reads, in one-letter code: Ribosomal RNA large subunit methyltransferase H (155 aa).

Residues Leu-72, Gly-103, and Leu-122–Leu-127 contribute to the S-adenosyl-L-methionine site.

Belongs to the RNA methyltransferase RlmH family. As to quaternary structure, homodimer.

It localises to the cytoplasm. It carries out the reaction pseudouridine(1915) in 23S rRNA + S-adenosyl-L-methionine = N(3)-methylpseudouridine(1915) in 23S rRNA + S-adenosyl-L-homocysteine + H(+). Functionally, specifically methylates the pseudouridine at position 1915 (m3Psi1915) in 23S rRNA. This Actinobacillus pleuropneumoniae serotype 3 (strain JL03) protein is Ribosomal RNA large subunit methyltransferase H.